Reading from the N-terminus, the 317-residue chain is Protein KlaC (317 aa).

In terms of biological role, belongs to the kla operon, which is associated with cryptic tellurite resistance, and IncW plasmid fertility inhibition. This Escherichia coli protein is Protein KlaC (klaC).